We begin with the raw amino-acid sequence, 249 residues long: Probable transcriptional regulatory protein Strop_1792 (249 aa).

This sequence belongs to the TACO1 family.

The protein localises to the cytoplasm. This Salinispora tropica (strain ATCC BAA-916 / DSM 44818 / JCM 13857 / NBRC 105044 / CNB-440) protein is Probable transcriptional regulatory protein Strop_1792.